A 436-amino-acid polypeptide reads, in one-letter code: 23S rRNA (uracil(1939)-C(5))-methyltransferase RlmD (436 aa).

One can recognise a TRAM domain in the interval 10 to 68 (KQKTTQKIVAEIQDLDYQGLGVAKIQGKTWFIENALPTEKVEAVVTDEKRQYGLATAQK). [4Fe-4S] cluster is bound by residues Cys81, Cys87, Cys90, and Cys168. S-adenosyl-L-methionine-binding residues include Gln270, Phe299, Asn304, Glu320, Asp347, and Asp368. Catalysis depends on Cys394, which acts as the Nucleophile.

It belongs to the class I-like SAM-binding methyltransferase superfamily. RNA M5U methyltransferase family. RlmD subfamily.

The enzyme catalyses uridine(1939) in 23S rRNA + S-adenosyl-L-methionine = 5-methyluridine(1939) in 23S rRNA + S-adenosyl-L-homocysteine + H(+). In terms of biological role, catalyzes the formation of 5-methyl-uridine at position 1939 (m5U1939) in 23S rRNA. The chain is 23S rRNA (uracil(1939)-C(5))-methyltransferase RlmD from Haemophilus parainfluenzae (strain T3T1).